The primary structure comprises 308 residues: Carbonic anhydrase 4 (308 aa).

The N-terminal stretch at 1 to 18 (MQLLFALLALGALRPLAG) is a signal peptide. The Alpha-carbonic anhydrase domain maps to 21-281 (LHWCYEIQAS…LGDRSVFKSQ (261 aa)). Intrachain disulfides connect Cys24/Cys34 and Cys44/Cys225. N-linked (GlcNAc...) asparagine glycosylation occurs at Asn31. Residue His86 is the Proton donor/acceptor of the active site. The Zn(2+) site is built by His113, His115, and His138. An N-linked (GlcNAc...) asparagine glycan is attached at Asn192. 221 to 222 (TT) lines the substrate pocket. Ser280 is lipidated: GPI-anchor amidated serine. Residues 281-308 (QAAGQLLPLPLPTLLVPTLACVMAGLLR) constitute a propeptide, removed in mature form.

It belongs to the alpha-carbonic anhydrase family. Interacts with SLC4A4. Zn(2+) serves as cofactor.

Its subcellular location is the cell membrane. It carries out the reaction hydrogencarbonate + H(+) = CO2 + H2O. With respect to regulation, inhibited by acetazolamide. Functionally, catalyzes the reversible hydration of carbon dioxide into bicarbonate and protons and thus is essential to maintaining intracellular and extracellular pH. May stimulate the sodium/bicarbonate transporter activity of SLC4A4 that acts in pH homeostasis. It is essential for acid overload removal from the retina and retina epithelium, and acid release in the choriocapillaris in the choroid. The chain is Carbonic anhydrase 4 (CA4) from Oryctolagus cuniculus (Rabbit).